The sequence spans 380 residues: Cytochrome b (380 aa).

The next 4 membrane-spanning stretches (helical) occupy residues 34–54 (FGSL…LLAM), 78–99 (WLIR…YLHI), 114–134 (WNTG…GYVL), and 179–199 (FFAL…IHLT). Residues His84 and His98 each contribute to the heme b site. Heme b is bound by residues His183 and His197. An a ubiquinone-binding site is contributed by His202. 4 consecutive transmembrane segments (helical) span residues 227 to 247 (TKDI…ALFS), 289 to 309 (LGGV…PLLH), 321 to 341 (LSQL…WIGS), and 348 to 368 (FIII…ILFP).

The protein belongs to the cytochrome b family. As to quaternary structure, the cytochrome bc1 complex contains 11 subunits: 3 respiratory subunits (MT-CYB, CYC1 and UQCRFS1), 2 core proteins (UQCRC1 and UQCRC2) and 6 low-molecular weight proteins (UQCRH/QCR6, UQCRB/QCR7, UQCRQ/QCR8, UQCR10/QCR9, UQCR11/QCR10 and a cleavage product of UQCRFS1). This cytochrome bc1 complex then forms a dimer. Heme b is required as a cofactor.

It is found in the mitochondrion inner membrane. Component of the ubiquinol-cytochrome c reductase complex (complex III or cytochrome b-c1 complex) that is part of the mitochondrial respiratory chain. The b-c1 complex mediates electron transfer from ubiquinol to cytochrome c. Contributes to the generation of a proton gradient across the mitochondrial membrane that is then used for ATP synthesis. The chain is Cytochrome b (MT-CYB) from Pygoscelis antarcticus (Chinstrap penguin).